A 59-amino-acid chain; its full sequence is Single-pass membrane and coiled-coil domain-containing protein 4 homolog (59 aa).

Residues 1-11 (MAGRNKAKPRL) show a composition bias toward basic residues. The tract at residues 1-20 (MAGRNKAKPRLSKKEKEERR) is disordered. A coiled-coil region spans residues 10–30 (RLSKKEKEERRKDMAEVQEKV). The helical transmembrane segment at 30–50 (VFSVVVPVVVAFTVVIMLIVY) threads the bilayer.

Belongs to the SMCO4 family.

The protein localises to the membrane. The chain is Single-pass membrane and coiled-coil domain-containing protein 4 homolog from Argas monolakensis (Mono lake bird tick).